Reading from the N-terminus, the 594-residue chain is Isocitrate dehydrogenase kinase/phosphatase (594 aa).

Residues Ala315 to Met321 and Lys336 each bind ATP. The active site involves Asp371.

Belongs to the AceK family.

It is found in the cytoplasm. The catalysed reaction is L-seryl-[isocitrate dehydrogenase] + ATP = O-phospho-L-seryl-[isocitrate dehydrogenase] + ADP + H(+). Bifunctional enzyme which can phosphorylate or dephosphorylate isocitrate dehydrogenase (IDH) on a specific serine residue. This is a regulatory mechanism which enables bacteria to bypass the Krebs cycle via the glyoxylate shunt in response to the source of carbon. When bacteria are grown on glucose, IDH is fully active and unphosphorylated, but when grown on acetate or ethanol, the activity of IDH declines drastically concomitant with its phosphorylation. The protein is Isocitrate dehydrogenase kinase/phosphatase of Klebsiella pneumoniae subsp. pneumoniae (strain ATCC 700721 / MGH 78578).